Consider the following 404-residue polypeptide: Serine/threonine transporter SstT (404 aa).

Helical transmembrane passes span 11-31 (IINA…IILA), 44-64 (LGGL…FVLV), 82-102 (IISL…TMSF), 144-164 (TANY…LHHA), 179-199 (VSFI…GLVA), 218-238 (GVLL…MVFI), 290-310 (IPLG…VLTL), 316-336 (MGIQ…AISA), and 363-383 (VAMQ…SAET).

The protein belongs to the dicarboxylate/amino acid:cation symporter (DAACS) (TC 2.A.23) family.

It is found in the cell inner membrane. The enzyme catalyses L-serine(in) + Na(+)(in) = L-serine(out) + Na(+)(out). It carries out the reaction L-threonine(in) + Na(+)(in) = L-threonine(out) + Na(+)(out). Functionally, involved in the import of serine and threonine into the cell, with the concomitant import of sodium (symport system). The chain is Serine/threonine transporter SstT from Desulfotalea psychrophila (strain LSv54 / DSM 12343).